The primary structure comprises 367 residues: Peptide chain release factor 2 (367 aa).

Glutamine 254 carries the post-translational modification N5-methylglutamine.

It belongs to the prokaryotic/mitochondrial release factor family. Post-translationally, methylated by PrmC. Methylation increases the termination efficiency of RF2.

It localises to the cytoplasm. In terms of biological role, peptide chain release factor 2 directs the termination of translation in response to the peptide chain termination codons UGA and UAA. The protein is Peptide chain release factor 2 of Bordetella bronchiseptica (strain ATCC BAA-588 / NCTC 13252 / RB50) (Alcaligenes bronchisepticus).